The following is a 458-amino-acid chain: UDP-N-acetylmuramoylalanine--D-glutamate ligase (458 aa).

124–130 contributes to the ATP binding site; it reads GSDGKTT.

The protein belongs to the MurCDEF family.

Its subcellular location is the cytoplasm. The catalysed reaction is UDP-N-acetyl-alpha-D-muramoyl-L-alanine + D-glutamate + ATP = UDP-N-acetyl-alpha-D-muramoyl-L-alanyl-D-glutamate + ADP + phosphate + H(+). The protein operates within cell wall biogenesis; peptidoglycan biosynthesis. Functionally, cell wall formation. Catalyzes the addition of glutamate to the nucleotide precursor UDP-N-acetylmuramoyl-L-alanine (UMA). In Clostridium perfringens (strain 13 / Type A), this protein is UDP-N-acetylmuramoylalanine--D-glutamate ligase.